The following is a 95-amino-acid chain: SMAD5 antisense gene protein 1 (95 aa).

2 disordered regions span residues 1–24 (MHKQ…SSWS) and 43–70 (SSPT…KPAN). Over residues 7-19 (LLPPPATPPPPPQ) the composition is skewed to pro residues.

As to expression, expressed in fetal tissues.

The polypeptide is SMAD5 antisense gene protein 1 (SMAD5-AS1) (Homo sapiens (Human)).